Here is a 1510-residue protein sequence, read N- to C-terminus: Chromosome partition protein MukB (1510 aa).

A coiled-coil region spans residues 6-30; it reads ELENEIELESDEVIMENENVEEIVD. ATP is bound at residue 75-82; sequence GGNGAGKS. 7 coiled-coil regions span residues 346-506, 553-633, 673-706, 821-847, 876-1064, 1094-1149, and 1249-1305; these read QHRL…HKMS, QQTP…NLTA, MQSQ…RLSQ, RAAR…QIAF, EELM…IQLQ, ERAR…RELV, and DAIE…QNIS. Positions 707–824 are flexible hinge; sequence PDGSEDPRLN…EIPLFGRAAR (118 aa).

Belongs to the SMC family. MukB subfamily. In terms of assembly, homodimerization via its hinge domain. Binds to DNA via its C-terminal region. Interacts, and probably forms a ternary complex, with MukE and MukF via its C-terminal region. The complex formation is stimulated by calcium or magnesium. Interacts with tubulin-related protein FtsZ.

Its subcellular location is the cytoplasm. It is found in the nucleoid. Plays a central role in chromosome condensation, segregation and cell cycle progression. Functions as a homodimer, which is essential for chromosome partition. Involved in negative DNA supercoiling in vivo, and by this means organize and compact chromosomes. May achieve or facilitate chromosome segregation by condensation DNA from both sides of a centrally located replisome during cell division. The sequence is that of Chromosome partition protein MukB from Haemophilus influenzae (strain 86-028NP).